A 65-amino-acid polypeptide reads, in one-letter code: Large ribosomal subunit protein bL35c (65 aa).

Residues 18–50 (SSGKILRHKASKSHLLQKKSSKHRRHLSSTCQV) form a disordered region. Over residues 22–44 (ILRHKASKSHLLQKKSSKHRRHL) the composition is skewed to basic residues.

The protein belongs to the bacterial ribosomal protein bL35 family.

It is found in the plastid. The protein localises to the chloroplast. The polypeptide is Large ribosomal subunit protein bL35c (Porphyra purpurea (Red seaweed)).